Here is a 195-residue protein sequence, read N- to C-terminus: ATP-dependent Clp protease proteolytic subunit 1 (195 aa).

S96 (nucleophile) is an active-site residue. H121 is an active-site residue.

Belongs to the peptidase S14 family. As to quaternary structure, fourteen ClpP subunits assemble into 2 heptameric rings which stack back to back to give a disk-like structure with a central cavity, resembling the structure of eukaryotic proteasomes.

It is found in the cytoplasm. The enzyme catalyses Hydrolysis of proteins to small peptides in the presence of ATP and magnesium. alpha-casein is the usual test substrate. In the absence of ATP, only oligopeptides shorter than five residues are hydrolyzed (such as succinyl-Leu-Tyr-|-NHMec, and Leu-Tyr-Leu-|-Tyr-Trp, in which cleavage of the -Tyr-|-Leu- and -Tyr-|-Trp bonds also occurs).. Cleaves peptides in various proteins in a process that requires ATP hydrolysis. Has a chymotrypsin-like activity. Plays a major role in the degradation of misfolded proteins. This Prochlorococcus marinus (strain MIT 9312) protein is ATP-dependent Clp protease proteolytic subunit 1.